A 275-amino-acid chain; its full sequence is Nitrogenase iron protein 3 (275 aa).

ATP is bound at residue 9-16; it reads GKGGIGKS. A [4Fe-4S] cluster-binding site is contributed by C97. The residue at position 100 (R100) is an ADP-ribosylarginine; by dinitrogenase reductase ADP-ribosyltransferase. [4Fe-4S] cluster is bound at residue C132.

Belongs to the NifH/BchL/ChlL family. Homodimer. [4Fe-4S] cluster serves as cofactor. The reversible ADP-ribosylation of Arg-100 inactivates the nitrogenase reductase and regulates nitrogenase activity.

It catalyses the reaction N2 + 8 reduced [2Fe-2S]-[ferredoxin] + 16 ATP + 16 H2O = H2 + 8 oxidized [2Fe-2S]-[ferredoxin] + 2 NH4(+) + 16 ADP + 16 phosphate + 6 H(+). The key enzymatic reactions in nitrogen fixation are catalyzed by the nitrogenase complex, which has 2 components: the iron protein and the molybdenum-iron protein. The protein is Nitrogenase iron protein 3 (nifH3) of Clostridium pasteurianum.